The primary structure comprises 525 residues: GMP synthase [glutamine-hydrolyzing] (525 aa).

Residues 9 to 207 (RILILDFGSQ…VLTISGCEAL (199 aa)) enclose the Glutamine amidotransferase type-1 domain. C86 serves as the catalytic Nucleophile. Active-site residues include H181 and E183. A GMPS ATP-PPase domain is found at 208 to 400 (WTPAKIVDDA…LGLPYDMVYR (193 aa)). Residue 235 to 241 (SGGVDSS) coordinates ATP.

As to quaternary structure, homodimer.

It catalyses the reaction XMP + L-glutamine + ATP + H2O = GMP + L-glutamate + AMP + diphosphate + 2 H(+). Its pathway is purine metabolism; GMP biosynthesis; GMP from XMP (L-Gln route): step 1/1. In terms of biological role, catalyzes the synthesis of GMP from XMP. The chain is GMP synthase [glutamine-hydrolyzing] from Marinobacter nauticus (strain ATCC 700491 / DSM 11845 / VT8) (Marinobacter aquaeolei).